The following is a 120-amino-acid chain: Protein FAM241B (120 aa).

The tract at residues 12 to 59 (QDDDPRVRTTTQHRSSSSQQGFFNRGHGAPPGGPGPRQQQAGARLGAA) is disordered. 2 stretches are compositionally biased toward low complexity: residues 19–39 (RTTT…RGHG) and 47–59 (PRQQ…LGAA). Serine 61 is subject to Phosphoserine. A helical membrane pass occupies residues 91–111 (ILLLFLLMMLGVRGLLLVGLV).

The protein belongs to the FAM241 family.

The protein resides in the membrane. In terms of biological role, may play a role in lysosome homeostasis. The protein is Protein FAM241B of Mus musculus (Mouse).